Consider the following 122-residue polypeptide: Large ribosomal subunit protein uL14 (122 aa).

The protein belongs to the universal ribosomal protein uL14 family. In terms of assembly, part of the 50S ribosomal subunit. Forms a cluster with proteins L3 and L19. In the 70S ribosome, L14 and L19 interact and together make contacts with the 16S rRNA in bridges B5 and B8.

Its function is as follows. Binds to 23S rRNA. Forms part of two intersubunit bridges in the 70S ribosome. The protein is Large ribosomal subunit protein uL14 of Leifsonia xyli subsp. xyli (strain CTCB07).